The sequence spans 182 residues: ATP-dependent protease subunit HslV (182 aa).

T10 is a catalytic residue. A166, C169, and S172 together coordinate Na(+).

It belongs to the peptidase T1B family. HslV subfamily. In terms of assembly, a double ring-shaped homohexamer of HslV is capped on each side by a ring-shaped HslU homohexamer. The assembly of the HslU/HslV complex is dependent on binding of ATP.

Its subcellular location is the cytoplasm. It catalyses the reaction ATP-dependent cleavage of peptide bonds with broad specificity.. Allosterically activated by HslU binding. Its function is as follows. Protease subunit of a proteasome-like degradation complex believed to be a general protein degrading machinery. The protein is ATP-dependent protease subunit HslV of Rickettsia peacockii (strain Rustic).